Here is a 487-residue protein sequence, read N- to C-terminus: Malonate-semialdehyde dehydrogenase (487 aa).

Residues alanine 150, phenylalanine 152, lysine 176, glutamate 179, arginine 180, serine 229, and threonine 251 each contribute to the NAD(+) site. The Nucleophile role is filled by cysteine 284. Glutamate 382 provides a ligand contact to NAD(+).

This sequence belongs to the aldehyde dehydrogenase family. IolA subfamily. Homotetramer.

The catalysed reaction is 3-oxopropanoate + NAD(+) + CoA + H2O = hydrogencarbonate + acetyl-CoA + NADH + H(+). The enzyme catalyses 2-methyl-3-oxopropanoate + NAD(+) + CoA + H2O = propanoyl-CoA + hydrogencarbonate + NADH + H(+). Its pathway is polyol metabolism; myo-inositol degradation into acetyl-CoA; acetyl-CoA from myo-inositol: step 7/7. In terms of biological role, catalyzes the oxidation of malonate semialdehyde (MSA) and methylmalonate semialdehyde (MMSA) into acetyl-CoA and propanoyl-CoA, respectively. Is involved in a myo-inositol catabolic pathway. Bicarbonate, and not CO2, is the end-product of the enzymatic reaction. The protein is Malonate-semialdehyde dehydrogenase of Bacillus subtilis (strain 168).